We begin with the raw amino-acid sequence, 486 residues long: Ribulose bisphosphate carboxylase large chain (486 aa).

Substrate is bound by residues Asn126 and Thr176. Lys178 (proton acceptor) is an active-site residue. A substrate-binding site is contributed by Lys180. Positions 204, 206, and 207 each coordinate Mg(2+). Residue Lys204 is modified to N6-carboxylysine. Residue His296 is the Proton acceptor of the active site. Positions 297, 329, and 381 each coordinate substrate.

Belongs to the RuBisCO large chain family. Type I subfamily. In terms of assembly, heterohexadecamer of 8 large chains and 8 small chains. Mg(2+) is required as a cofactor.

The enzyme catalyses 2 (2R)-3-phosphoglycerate + 2 H(+) = D-ribulose 1,5-bisphosphate + CO2 + H2O. The catalysed reaction is D-ribulose 1,5-bisphosphate + O2 = 2-phosphoglycolate + (2R)-3-phosphoglycerate + 2 H(+). Its function is as follows. RuBisCO catalyzes two reactions: the carboxylation of D-ribulose 1,5-bisphosphate, the primary event in carbon dioxide fixation, as well as the oxidative fragmentation of the pentose substrate. Both reactions occur simultaneously and in competition at the same active site. The sequence is that of Ribulose bisphosphate carboxylase large chain from Methylacidiphilum infernorum (isolate V4) (Methylokorus infernorum (strain V4)).